A 697-amino-acid polypeptide reads, in one-letter code: Lebercilin (697 aa).

A disordered region spans residues 1-90 (MGERAGSPGT…VGFRSQSLNR (90 aa)). Serine 7 and serine 45 each carry phosphoserine. A compositionally biased stretch (low complexity) spans 32–45 (SSGRSSLVSSSPAS). 2 coiled-coil regions span residues 103–297 (RILS…IKNI) and 389–485 (EEKF…RNLK). Disordered stretches follow at residues 412–432 (WEREELDKKQKEKASLLEREE), 522–548 (HHLQDISFSTPKGEGQNSGNVRSPASP), and 606–697 (EQLF…VALR). A compositionally biased stretch (basic and acidic residues) spans 416 to 432 (ELDKKQKEKASLLEREE). Over residues 527–547 (ISFSTPKGEGQNSGNVRSPAS) the composition is skewed to polar residues. Positions 612–626 (SGSSTISSKSSDPNS) are enriched in low complexity. Residues 686–697 (SVEDEIEEVALR) are compositionally biased toward acidic residues.

Belongs to the LCA5 family. In terms of assembly, interacts with NINL. Interacts with OFD1. Interacts with FAM161A. Interacts with components of the IFT complex B. Widely expressed.

The protein localises to the cytoplasm. It is found in the cytoskeleton. The protein resides in the cilium axoneme. It localises to the cilium basal body. Its subcellular location is the microtubule organizing center. The protein localises to the centrosome. It is found in the cell projection. The protein resides in the cilium. Functionally, involved in intraflagellar protein (IFT) transport in photoreceptor cilia. The chain is Lebercilin (LCA5) from Homo sapiens (Human).